The following is a 660-amino-acid chain: CXXC-type zinc finger protein 1 (660 aa).

Met-1 carries the post-translational modification N-acetylmethionine. Residues 1 to 14 show a composition bias toward acidic residues; sequence MEGDGSDLEPPDAG. The disordered stretch occupies residues 1 to 20; the sequence is MEGDGSDLEPPDAGDDSKSE. 2 positions are modified to phosphoserine: Ser-6 and Ser-19. The segment at 28–76 adopts a PHD-type zinc-finger fold; the sequence is YCICRKPDINCFMIGCDNCNEWFHGDCIRITEKMAKAIREWYCRECREK. Over residues 91–120 the composition is skewed to basic and acidic residues; it reads ERDGSERAGSEPRDEGGGRKRPASDPELQR. A disordered region spans residues 91 to 166; the sequence is ERDGSERAGS…QQQQQQQQQI (76 aa). Ser-124 is modified (phosphoserine). A CXXC-type zinc finger spans residues 164 to 213; the sequence is QQIKRSARMCGECEACRRTEDCGHCDFCRDMKKFGGPNKIRQKCRLRQCQ. The Zn(2+) site is built by Cys-173, Cys-176, Cys-179, Cys-185, Cys-188, Cys-191, Cys-207, and Cys-212. 2 disordered regions span residues 223-287 and 328-375; these read FPSS…SDED and AVKV…DPAS. Position 228 is a phosphoserine (Ser-228). Thr-231 is subject to Phosphothreonine. Lys-254 participates in a covalent cross-link: Glycyl lysine isopeptide (Lys-Gly) (interchain with G-Cter in SUMO2). The span at 328-338 shows a compositional bias: basic residues; sequence AVKVKHVKRRE. Over residues 339–349 the composition is skewed to basic and acidic residues; the sequence is KKSEKKKEERY. The span at 350–362 shows a compositional bias: basic residues; that stretch reads KRHRQKQKHKDKW. A compositionally biased stretch (basic and acidic residues) spans 363-372; it reads KHPERADAKD. Residues 426 to 479 are a coiled coil; sequence AEEHGKKLLERIRREQQSARTRLQEMERRFHELEAIILRAKQQAVREDEENNEN.

Component of the SET1 complex, at least composed of the catalytic subunit (SETD1A or SETD1B), WDR5, WDR82, RBBP5, ASH2L/ASH2, CXXC1/CFP1, HCFC1 and DPY30. Interacts with SETD1A. Interacts with ZNF335. Interacts with PRDM9; this interaction does not link PRDM9-activated recombination hotspot sites with DSB machinery and is not required for the hotspot recognition pathway. Interacts with histone H3K4me3. As to expression, expressed in seminiferous tubules and in both germ cells and Sertoli cells. Highly expressed in spermatogonia, weakly expressed in leptonema and zygonema, and then again high expression in pachynema and diplonema, decreasing to undetectable levels in spermatids.

The protein localises to the nucleus speckle. It is found in the nucleus. Its function is as follows. Transcriptional activator that exhibits a unique DNA binding specificity for CpG unmethylated motifs with a preference for CpGG. In Mus musculus (Mouse), this protein is CXXC-type zinc finger protein 1 (Cxxc1).